Reading from the N-terminus, the 364-residue chain is Protein spindle-F (364 aa).

A disordered region spans residues 1–26 (MEASAAKITPMASSMSASGSTNSPSS). A compositionally biased stretch (low complexity) spans 9–26 (TPMASSMSASGSTNSPSS). Positions 32-114 (ALQVALQTIK…GMVSNENRRL (83 aa)) form a coiled coil. S53 carries the phosphoserine modification. Positions 56–75 (EENQQLREASSRSEGAPRAN) are disordered. 3 positions are modified to phosphoserine: S85, S172, and S202. Positions 210-243 (AKRCLDGLQELRREAMKQQQELRSVMTLLENRIA) form a coiled coil. Phosphoserine occurs at positions 264 and 270. Residues 310-336 (EKTCPMCGKQYSSQVSFNAFREHVEMH) form a UBZ1-type zinc finger. The Zn(2+) site is built by C313 and C316. S325 bears the Phosphoserine mark. Positions 332 and 336 each coordinate Zn(2+). The residue at position 349 (S349) is a Phosphoserine.

Forms homooligomers. Interacts with the dynein light chain ctp. Interacts (via C-terminus) with IKKepsilon; this leads to phosphorylation of spn-F. Forms ternary complexes with ctp and IKKepsilon; this is required for spn-F redistribution from puncta in larval neurons and for dendrite pruning. Interacts with ctp and IKKepsilon through distinct regions. Interacts (via C-terminus) with jvl. Post-translationally, phosphorylated by IKKepsilon. Phosphorylation is required for spn-F neuronal distribution and dendrite pruning and reduces spn-F homooligomerization. It does not lead to spn-F degradation. In pupal bristles, localizes to the bristle tip throughout the elongation period (at protein level).

The protein resides in the cytoplasm. It localises to the cytoskeleton. The protein localises to the cell projection. Its subcellular location is the axon. It is found in the dendrite. The protein resides in the perikaryon. Plays a role in oocyte axis determination and microtubule organization during oogenesis. Also required for polarized organization of the bristle. Required, with jvl, for activation of the kinase IKKepsilon in the germ line. Also required for localization of IKKepsilon to the distal tip of elongating bristles by acting as an adapter linking IKKepsilon and cytoplasmic dynein. Involved in dendrite pruning in larval sensory neurons during metamorphosis. The sequence is that of Protein spindle-F from Drosophila melanogaster (Fruit fly).